The following is a 365-amino-acid chain: Isopentenyl-diphosphate delta-isomerase (365 aa).

4–5 (RK) contributes to the substrate binding site. FMN-binding positions include 62 to 64 (GMT), Ser-92, and Asn-121. 92–94 (SQR) serves as a coordination point for substrate. Gln-155 is a substrate binding site. Glu-156 is a Mg(2+) binding site. Residues Lys-187, Thr-216, 267-269 (GVR), and 288-289 (AL) contribute to the FMN site.

The protein belongs to the IPP isomerase type 2 family. As to quaternary structure, homooctamer. Dimer of tetramers. FMN is required as a cofactor. The cofactor is NADPH. It depends on Mg(2+) as a cofactor.

It is found in the cytoplasm. It catalyses the reaction isopentenyl diphosphate = dimethylallyl diphosphate. Functionally, involved in the biosynthesis of isoprenoids. Catalyzes the 1,3-allylic rearrangement of the homoallylic substrate isopentenyl (IPP) to its allylic isomer, dimethylallyl diphosphate (DMAPP). The protein is Isopentenyl-diphosphate delta-isomerase of Methanopyrus kandleri (strain AV19 / DSM 6324 / JCM 9639 / NBRC 100938).